Reading from the N-terminus, the 578-residue chain is 65-kDa microtubule-associated protein 2 (578 aa).

5 coiled-coil regions span residues 64–84, 151–184, 235–257, 290–312, and 461–489; these read AELL…TTAL, DETD…VLEF, TLKE…LTDL, ALAL…LKSS, and AMLD…QQEQ. The span at 473-494 shows a compositional bias: basic and acidic residues; sequence REDEKRRLKEQKKQQEQPHTDQ. A disordered region spans residues 473 to 578; it reads REDEKRRLKE…SRADPVMASP (106 aa). Ser-503 and Ser-532 each carry phosphoserine. A compositionally biased stretch (polar residues) spans 549 to 558; it reads KIASPSNIVA. A phosphoserine mark is found at Ser-566, Ser-569, and Ser-577.

The protein belongs to the MAP65/ASE1 family. Forms a dimer. Binds to microtubules (MT). Bundles polymerized MT via the formation of 25-nm crossbridges with centrally located endocytic MT.

The protein localises to the nucleus. It is found in the cytoplasm. It localises to the cytoskeleton. The protein resides in the spindle pole. Its subcellular location is the phragmoplast. Microtubule-associated protein that stabilize microtubules (MT). Involved in the regulation of MT organization and dynamics. Confers MT resistance to the drug propyzamide and cold conditions. This is 65-kDa microtubule-associated protein 2 (MAP65-2) from Arabidopsis thaliana (Mouse-ear cress).